Consider the following 103-residue polypeptide: Small ribosomal subunit protein uS10 (103 aa).

The protein belongs to the universal ribosomal protein uS10 family. Part of the 30S ribosomal subunit.

Functionally, involved in the binding of tRNA to the ribosomes. The chain is Small ribosomal subunit protein uS10 from Persephonella marina (strain DSM 14350 / EX-H1).